The following is a 210-amino-acid chain: 7-carboxy-7-deazaguanine synthase (210 aa).

Residues 12–14 and Arg27 each bind substrate; that span reads LQG. A Radical SAM core domain is found at 18–210; it reads NAGRPAVFCR…MQTHKYLNIP (193 aa). Residues Cys31, Cys46, and Cys49 each contribute to the [4Fe-4S] cluster site. S-adenosyl-L-methionine is bound at residue 48-50; it reads FCD. Thr51 is a Mg(2+) binding site. Residue Thr90 participates in substrate binding. S-adenosyl-L-methionine is bound by residues Gly92, 133–135, and 173–176; these read SPK and QPMD. A substrate-binding site is contributed by Pro210.

The protein belongs to the radical SAM superfamily. 7-carboxy-7-deazaguanine synthase family. Homodimer. [4Fe-4S] cluster is required as a cofactor. Requires S-adenosyl-L-methionine as cofactor. It depends on Mg(2+) as a cofactor.

The enzyme catalyses 6-carboxy-5,6,7,8-tetrahydropterin + H(+) = 7-carboxy-7-deazaguanine + NH4(+). It functions in the pathway purine metabolism; 7-cyano-7-deazaguanine biosynthesis. Its function is as follows. Catalyzes the complex heterocyclic radical-mediated conversion of 6-carboxy-5,6,7,8-tetrahydropterin (CPH4) to 7-carboxy-7-deazaguanine (CDG), a step common to the biosynthetic pathways of all 7-deazapurine-containing compounds. The polypeptide is 7-carboxy-7-deazaguanine synthase (Burkholderia multivorans (strain ATCC 17616 / 249)).